An 81-amino-acid polypeptide reads, in one-letter code: Small ribosomal subunit protein bS18 (81 aa).

Belongs to the bacterial ribosomal protein bS18 family. In terms of assembly, part of the 30S ribosomal subunit. Forms a tight heterodimer with protein bS6.

Its function is as follows. Binds as a heterodimer with protein bS6 to the central domain of the 16S rRNA, where it helps stabilize the platform of the 30S subunit. This is Small ribosomal subunit protein bS18 from Desulfotalea psychrophila (strain LSv54 / DSM 12343).